Here is a 71-residue protein sequence, read N- to C-terminus: Disintegrin tzabcanin (71 aa).

In terms of domain architecture, Disintegrin spans 1–71 (GEECDCGSPA…ADCPRNHFHA (71 aa)). 6 cysteine pairs are disulfide-bonded: cysteine 4/cysteine 19, cysteine 6/cysteine 14, cysteine 13/cysteine 36, cysteine 27/cysteine 33, cysteine 32/cysteine 57, and cysteine 45/cysteine 64. The short motif at 49-51 (RGD) is the Cell attachment site element.

Belongs to the venom metalloproteinase (M12B) family. P-II subfamily. P-IIa sub-subfamily. In terms of tissue distribution, expressed by the venom gland.

It is found in the secreted. Functionally, inhibits fibrinogen interaction with platelets. Acts by binding to alpha-IIb/beta-3 (ITGA2B/ITGB3) on the platelet surface and inhibits aggregation induced by ADP, thrombin, platelet-activating factor and collagen. Inhibits cell adhesion to vitronectin, probably by blocking its receptor integrin alpha-V/beta-3 (ITGAV/ITGB3), and to fibronectin in vitro. Shows little to no cytotoxicity in vitro. This Crotalus tzabcan (Yucatan neotropical rattlesnake) protein is Disintegrin tzabcanin.